Consider the following 318-residue polypeptide: NADH-ubiquinone oxidoreductase chain 1 (318 aa).

8 helical membrane passes run 2–22 (PMTN…FLML), 68–88 (ITLY…LWTP), 100–120 (LGLL…LWSG), 146–166 (LAII…STLV), 171–191 (HLWL…STLA), 213–233 (IEYA…NIIM), 253–273 (ELYT…FLWI), and 285–305 (LMHL…MWYI).

Belongs to the complex I subunit 1 family. As to quaternary structure, core subunit of respiratory chain NADH dehydrogenase (Complex I) which is composed of 45 different subunits.

The protein resides in the mitochondrion inner membrane. The catalysed reaction is a ubiquinone + NADH + 5 H(+)(in) = a ubiquinol + NAD(+) + 4 H(+)(out). In terms of biological role, core subunit of the mitochondrial membrane respiratory chain NADH dehydrogenase (Complex I) which catalyzes electron transfer from NADH through the respiratory chain, using ubiquinone as an electron acceptor. Essential for the catalytic activity and assembly of complex I. The chain is NADH-ubiquinone oxidoreductase chain 1 (MT-ND1) from Pan troglodytes (Chimpanzee).